Reading from the N-terminus, the 260-residue chain is DNA repair protein RecO (260 aa).

Belongs to the RecO family.

Its function is as follows. Involved in DNA repair and RecF pathway recombination. In Desulfosudis oleivorans (strain DSM 6200 / JCM 39069 / Hxd3) (Desulfococcus oleovorans), this protein is DNA repair protein RecO.